A 136-amino-acid polypeptide reads, in one-letter code: Acyl-CoA thioesterase YbgC (136 aa).

The active site involves Asp-18.

This sequence belongs to the 4-hydroxybenzoyl-CoA thioesterase family.

Its function is as follows. Displays acyl-CoA thioesterase activity with short chain aliphatic acyl-CoA thioesters, such as propionyl-CoA and butyryl-CoA. Enzyme activity is relatively low, suggesting that the acyl-CoA thioesters used in the assays are not the physiological substrates. Has no detectable activity with 4-hydroxybenzoyl-CoA, lauroyl-CoA (C12:0), arachidoyl-CoA (C20:0) and arachidonoyl-CoA (C20:4). This is Acyl-CoA thioesterase YbgC (ybgC) from Haemophilus influenzae (strain ATCC 51907 / DSM 11121 / KW20 / Rd).